A 293-amino-acid polypeptide reads, in one-letter code: Putative ribose uptake protein RbsU (293 aa).

10 helical membrane passes run 2 to 24 (SIVA…TVAS), 34 to 56 (IIGA…SSGF), 63 to 80 (LFAL…IITF), 95 to 117 (TTAF…WPGI), 122 to 139 (IGFT…MTVW), 154 to 171 (AVVL…YSAA), 180 to 202 (LTAF…FMNM), 212 to 234 (ITWL…LISA), 241 to 263 (LATG…IYFL), and 273 to 292 (VITI…TVFI).

This sequence belongs to the GRP transporter (TC 2.A.7.5) family.

The protein localises to the cell membrane. Its function is as follows. Could be involved in the uptake of ribose. This Staphylococcus aureus (strain Mu50 / ATCC 700699) protein is Putative ribose uptake protein RbsU (rbsU).